The following is a 255-amino-acid chain: tRNA (guanine-N(1)-)-methyltransferase (255 aa).

S-adenosyl-L-methionine is bound by residues G113 and 133–138 (IGDYVL).

This sequence belongs to the RNA methyltransferase TrmD family. In terms of assembly, homodimer.

The protein localises to the cytoplasm. The catalysed reaction is guanosine(37) in tRNA + S-adenosyl-L-methionine = N(1)-methylguanosine(37) in tRNA + S-adenosyl-L-homocysteine + H(+). Its function is as follows. Specifically methylates guanosine-37 in various tRNAs. This chain is tRNA (guanine-N(1)-)-methyltransferase, found in Shigella flexneri serotype 5b (strain 8401).